The sequence spans 134 residues: Histone-like protein Rv3852 (134 aa).

The span at 1 to 10 (MPDPQDRPDS) shows a compositional bias: basic and acidic residues. The segment at 1-68 (MPDPQDRPDS…PAEAPVSLQQ (68 aa)) is disordered. Basic residues predominate over residues 23–48 (LPAKKAAKKAPARKTPAKKAPAKKTP). Residues 111-128 (PVPLIVAVTLSLLALLLI) traverse the membrane as a helical segment.

Homodimer in solution. Is probably able to self-associate in higher oligomers along the DNA molecules. Interacts with the N-terminal region of Wag31.

Its subcellular location is the cell inner membrane. Its activity is regulated as follows. Can interact directly in vitro with the compound agrimophol, a phloroglucinol from the A.pilosa plant, whose extracts have been used in traditional Chinese medicine to treat pulmonary infections. Interaction with agrimophol leads to disruption of Rv3852's DNA binding function. In terms of biological role, binds DNA in vitro. It has been proposed that Rv3852 plays a role in nucleoid organization and may function as an anchorage to tether the DNA to the membrane. However, it was later shown that it has no influence on nucleoid shape or compaction. It plays no role in virulence and only a minor role in the control of transcription, and does not appear to function as a typical nucleoid-associated protein. Its function is as follows. Interacts with Wag31, an important cell shape and cell wall integrity determinant, and facilitates the localization of Wag31 to the cell poles and the cell wall, thus enabling nascent peptidoglycan synthesis. The polypeptide is Histone-like protein Rv3852 (Mycobacterium tuberculosis (strain ATCC 25618 / H37Rv)).